The sequence spans 641 residues: Isomalto-dextranase (641 aa).

The tat-type signal signal peptide spans 1–39 (MMNLSRRTLLTTGSAATLAYALGMAGSAQAATAVTARPG). Asp227 (nucleophile) is an active-site residue. Asp288 functions as the Proton donor in the catalytic mechanism. The region spanning 500–640 (TRYPAAFAAW…AINLNWIELD (141 aa)) is the CBM6 domain. The tract at residues 556-588 (SGYRYANATDDNTTSKTTTKKANPEKADRSTVD) is disordered. Over residues 561–576 (ANATDDNTTSKTTTKK) the composition is skewed to low complexity. Over residues 577 to 586 (ANPEKADRST) the composition is skewed to basic and acidic residues.

This sequence belongs to the glycosyl hydrolase 27 family. Predicted to be exported by the Tat system. The position of the signal peptide cleavage has been experimentally proven.

It localises to the secreted. It carries out the reaction Hydrolysis of (1-&gt;6)-alpha-D-glucosidic linkages in polysaccharides, to remove successive isomaltose units from the non-reducing ends of the chains.. This is Isomalto-dextranase (imd) from Arthrobacter globiformis.